The chain runs to 237 residues: Bax inhibitor 1 (237 aa).

Over methionine 1–lysine 29 the chain is Cytoplasmic. Residue lysine 7 forms a Glycyl lysine isopeptide (Lys-Gly) (interchain with G-Cter in ubiquitin) linkage. The helical transmembrane segment at valine 30–valine 50 threads the bilayer. The Lumenal portion of the chain corresponds to threonine 51–histidine 52. A helical membrane pass occupies residues phenylalanine 53 to alanine 73. The Cytoplasmic segment spans residues threonine 74–glycine 86. Residues leucine 87–isoleucine 107 traverse the membrane as a helical segment. Topologically, residues alanine 108–serine 112 are lumenal. The helical transmembrane segment at isoleucine 113 to leucine 133 threads the bilayer. Residues tyrosine 134–serine 139 lie on the Cytoplasmic side of the membrane. A helical transmembrane segment spans residues tyrosine 140–glycine 160. At asparagine 161–serine 166 the chain is on the lumenal side. The helical transmembrane segment at isoleucine 167–phenylalanine 187 threads the bilayer. At aspartate 188–histidine 206 the chain is on the cytoplasmic side. The helical intramembrane region spans cysteine 207–phenylalanine 227. Residues asparagine 228 to lysine 237 are Cytoplasmic-facing.

Belongs to the BI1 family. In terms of assembly, interacts with BCL2. Interacts with BCL2L1. Interacts with ERN1. Ubiquitinated by BFAR, leading to proteasomal degradation. Highly abundant in adult testis.

The protein resides in the endoplasmic reticulum membrane. Its function is as follows. Endoplasmic reticulum (ER)-resident protein that confers cellular protection as an anti-apoptotic protein by limiting multiple stress-inducing pathways surrounding the endoplasmic reticulum and mitochondria. Inhibits the activities of the key sensor for the endoplasmic reticulum unfolded protein response IRE1alpha/ERN1 both directly and by blocking BAX/BAK binding. Modulates ER calcium homeostasis by acting as a calcium-leak channel. Negatively regulates autophagy and autophagosome formation, especially during periods of nutrient deprivation, and reduces cell survival during starvation. The polypeptide is Bax inhibitor 1 (Tmbim6) (Mus musculus (Mouse)).